A 229-amino-acid chain; its full sequence is Meiotically up-regulated gene 31 protein (229 aa).

Disordered regions lie at residues 16–68 (EDSA…EEDK) and 189–229 (GLPE…TTWA).

The protein localises to the endoplasmic reticulum. Its function is as follows. Has a role in meiosis. The protein is Meiotically up-regulated gene 31 protein (mug31) of Schizosaccharomyces pombe (strain 972 / ATCC 24843) (Fission yeast).